The sequence spans 505 residues: UDP-N-acetylmuramate--L-alanine ligase (505 aa).

Residue 164 to 170 (GTHGKTT) coordinates ATP.

It belongs to the MurCDEF family.

Its subcellular location is the cytoplasm. The enzyme catalyses UDP-N-acetyl-alpha-D-muramate + L-alanine + ATP = UDP-N-acetyl-alpha-D-muramoyl-L-alanine + ADP + phosphate + H(+). Its pathway is cell wall biogenesis; peptidoglycan biosynthesis. Its function is as follows. Cell wall formation. The polypeptide is UDP-N-acetylmuramate--L-alanine ligase (Synechocystis sp. (strain ATCC 27184 / PCC 6803 / Kazusa)).